We begin with the raw amino-acid sequence, 132 residues long: Intraflagellar transport protein 20 homolog B (132 aa).

A coiled-coil region spans residues 87–112 (EAQQQQLYALIAEKKMQLERYRIEYD).

The protein localises to the golgi apparatus. The protein resides in the cis-Golgi network. It is found in the cytoplasm. Its subcellular location is the cytoskeleton. It localises to the microtubule organizing center. The protein localises to the centrosome. The protein resides in the centriole. It is found in the cell projection. Its subcellular location is the cilium. In terms of biological role, involved in ciliary process assembly. May play a role in the trafficking of ciliary membrane proteins from the Golgi complex to the cilium. Regulates the platelet-derived growth factor receptor-alpha (PDGFRA) signaling pathway. Plays an important role in spermatogenesis, particularly spermiogenesis, when germ cells form flagella. The protein is Intraflagellar transport protein 20 homolog B (ift20-b) of Xenopus laevis (African clawed frog).